A 117-amino-acid chain; its full sequence is Immunoglobulin kappa variable 1-12 (117 aa).

A signal peptide spans 1-22; the sequence is MDMRVPAQLLGLLLLWFPGSRC. Positions 23–45 are framework-1; sequence DIQMTQSPSSVSASVGDRVTITC. An Ig-like domain is found at 24 to 117; it reads IQMTQSPSSV…YYCQQANSFP (94 aa). A disulfide bridge links Cys-45 with Cys-110. Positions 46–56 are complementarity-determining-1; sequence RASQGISSWLA. Residues 57–71 are framework-2; sequence WYQQKPGKAPKLLIY. Residues 72-78 are complementarity-determining-2; the sequence is AASSLQS. Residues 79–110 form a framework-3 region; the sequence is GVPSRFSGSGSGTDFTLTISSLQPEDFATYYC. A complementarity-determining-3 region spans residues 111-117; it reads QQANSFP.

In terms of assembly, immunoglobulins are composed of two identical heavy chains and two identical light chains; disulfide-linked.

Its subcellular location is the secreted. The protein localises to the cell membrane. V region of the variable domain of immunoglobulin light chains that participates in the antigen recognition. Immunoglobulins, also known as antibodies, are membrane-bound or secreted glycoproteins produced by B lymphocytes. In the recognition phase of humoral immunity, the membrane-bound immunoglobulins serve as receptors which, upon binding of a specific antigen, trigger the clonal expansion and differentiation of B lymphocytes into immunoglobulins-secreting plasma cells. Secreted immunoglobulins mediate the effector phase of humoral immunity, which results in the elimination of bound antigens. The antigen binding site is formed by the variable domain of one heavy chain, together with that of its associated light chain. Thus, each immunoglobulin has two antigen binding sites with remarkable affinity for a particular antigen. The variable domains are assembled by a process called V-(D)-J rearrangement and can then be subjected to somatic hypermutations which, after exposure to antigen and selection, allow affinity maturation for a particular antigen. The chain is Immunoglobulin kappa variable 1-12 from Homo sapiens (Human).